A 1687-amino-acid polypeptide reads, in one-letter code: Brefeldin A-inhibited guanine nucleotide-exchange protein 1 (1687 aa).

The disordered stretch occupies residues 494–529 (SLENEAPANNHSNSNEEDGTTIDHDFHPDLNPESSD). Residues 514 to 523 (TIDHDFHPDL) show a composition bias toward basic and acidic residues. An SEC7 domain is found at 532–719 (TLEQRRAYKI…GALYDQVVIN (188 aa)). E634 is an active-site residue. The tract at residues 1229-1248 (KGRSSSPSTPVTDDHSPSTQ) is disordered. Residues 1232 to 1248 (SSSPSTPVTDDHSPSTQ) show a composition bias toward polar residues.

Homodimer.

It is found in the cytoplasm. The protein localises to the cytosol. It localises to the membrane. With respect to regulation, inhibited by brefeldin A. Functionally, activates the ARF proteins by exchanging bound GDP for free GTP. Plays a role in vesicular protein sorting. This is Brefeldin A-inhibited guanine nucleotide-exchange protein 1 (BIG1) from Arabidopsis thaliana (Mouse-ear cress).